Reading from the N-terminus, the 1025-residue chain is Kinesin-like protein KIN-14P (1025 aa).

Disordered stretches follow at residues 1 to 87 (MNPM…MHHG) and 263 to 286 (YSQI…NEEE). Positions 15–28 (STPRSPFSPFSPLS) are enriched in low complexity. Positions 29 to 41 (VDDRHRNHADTKT) are enriched in basic and acidic residues. Low complexity predominate over residues 42 to 53 (PRSPFSPFSPLS). Over residues 65-75 (KFQQALASSGQ) the composition is skewed to polar residues. The stretch at 203 to 425 (HEIATQQLRQ…REMEKKSESN (223 aa)) forms a coiled coil. Positions 270 to 286 (TKTEKSKWEEQKKNEEE) are enriched in basic and acidic residues. Residues 509–838 (NIRVFCRVRP…LKFAERVSGV (330 aa)) enclose the Kinesin motor domain. 593-600 (GQTGSGKT) lines the ATP pocket. Positions 847–879 (KEGKDVRDLMEQLASLKDTIARKDEEIERLQHQ) form a coiled coil. 3 disordered regions span residues 881–926 (QRLQ…SAEA), 939–977 (AASM…RPLD), and 994–1025 (TGLT…KRWA). 2 stretches are compositionally biased toward polar residues: residues 901-913 (SDTG…SRYS) and 939-948 (AASMGTQGSI). A compositionally biased stretch (basic and acidic residues) spans 950-962 (VTKRPPRISDRAK). 2 stretches are compositionally biased toward low complexity: residues 963-974 (SVTAKSSTSVTR) and 998-1016 (SSSK…STSS).

The protein belongs to the TRAFAC class myosin-kinesin ATPase superfamily. Kinesin family. KIN-14 subfamily.

The protein is Kinesin-like protein KIN-14P of Arabidopsis thaliana (Mouse-ear cress).